The chain runs to 198 residues: Recombination protein RecR (198 aa).

Residues 56–71 (CDTCGNVDTQNPCGIC) form a C4-type zinc finger. In terms of domain architecture, Toprim spans 79–174 (KSICVVEDVA…RITQLAHGLP (96 aa)).

Belongs to the RecR family.

May play a role in DNA repair. It seems to be involved in an RecBC-independent recombinational process of DNA repair. It may act with RecF and RecO. The protein is Recombination protein RecR of Erythrobacter litoralis (strain HTCC2594).